A 1406-amino-acid chain; its full sequence is Sterol 3-beta-glucosyltransferase (1406 aa).

Positions A83 to S231 are disordered. Residues G110–S128 show a composition bias toward polar residues. Low complexity predominate over residues S209 to S231. A GRAM 1 domain is found at R236–V286. The PH domain maps to V286–F385. Disordered stretches follow at residues A457–A558 and L576–P622. The span at H468 to T478 shows a compositional bias: basic and acidic residues. Polar residues-rich tracts occupy residues G490–A499 and S531–W548. A compositionally biased stretch (basic and acidic residues) spans L576–G587. Residues D730–K796 form the GRAM 2 domain. The UDP-alpha-D-glucose site is built by S917, R918, D920, A1220, H1222, H1235, G1239, T1240, D1259, and Q1260. Residues Q1334–R1406 form a disordered region. Over residues S1336 to A1349 the composition is skewed to low complexity. Over residues Q1355 to M1375 the composition is skewed to acidic residues. Over residues D1376–S1387 the composition is skewed to basic and acidic residues. The segment covering L1397 to R1406 has biased composition (polar residues).

It belongs to the glycosyltransferase 28 family.

The protein resides in the cytoplasm. The protein localises to the preautophagosomal structure membrane. It catalyses the reaction a sterol + UDP-alpha-D-glucose = a sterol 3-beta-D-glucoside + UDP + H(+). The enzyme catalyses ergosterol + UDP-alpha-D-glucose = ergosteryl 3-beta-D-glucoside + UDP + H(+). In terms of biological role, sterol glycosyltransferase responsible for the glycosylation of ergosterol to form ergosterol-glucoside. This Aspergillus clavatus (strain ATCC 1007 / CBS 513.65 / DSM 816 / NCTC 3887 / NRRL 1 / QM 1276 / 107) protein is Sterol 3-beta-glucosyltransferase.